The following is a 551-amino-acid chain: uncharacterized protein (551 aa).

Belongs to the GSP E family.

This is an uncharacterized protein from Methanocaldococcus jannaschii (strain ATCC 43067 / DSM 2661 / JAL-1 / JCM 10045 / NBRC 100440) (Methanococcus jannaschii).